A 306-amino-acid chain; its full sequence is MHCKILGLPVQEGTGRKGCNMGPDSYRAAGIADAIRELGHECTDLGNLAPAAQRPLQHPNHAIKALPYAVAWIEAISEAAYRESAEGFPIFLGGDHLLAAGTVPGIARRAAEKGRKQFVLWLDAHTDFHTLETTTSGNLHGTPVAYYTGQKGFEGYFPKLAAPIDPHNVCMLGIRSVDPAEREAVKKTEVIVYDMRLIDEHGVAALLRRFLERVKAEDGLLHVSLDVDFLDPSIAPAVGTTVPGGATFREAHLIMEMLHDSGLVTSLDLVELNPFLDERGRTAAVMVDLMASLLGRSVMDRPTISY.

H96, D123, H125, and D127 together coordinate Mn(2+). Substrate contacts are provided by residues 125–129, 136–138, and D178; these read HTDFH and SGN. Mn(2+)-binding residues include D226 and D228. Substrate contacts are provided by T240 and E271.

The protein belongs to the arginase family. The cofactor is Mn(2+).

It carries out the reaction L-arginine + H2O = urea + L-ornithine. Its pathway is nitrogen metabolism; urea cycle; L-ornithine and urea from L-arginine: step 1/1. The protein is Arginase (arcB) of Brucella abortus biovar 1 (strain 9-941).